The chain runs to 325 residues: Glutarate 2-hydroxylase (325 aa).

Fe cation contacts are provided by histidine 160, aspartate 162, and histidine 292.

Belongs to the glutarate hydroxylase family. As to quaternary structure, homotetramer. Fe(2+) is required as a cofactor.

It carries out the reaction glutarate + 2-oxoglutarate + O2 = (S)-2-hydroxyglutarate + succinate + CO2. It functions in the pathway amino-acid degradation. In terms of biological role, acts as an alpha-ketoglutarate-dependent dioxygenase catalyzing hydroxylation of glutarate (GA) to L-2-hydroxyglutarate (L2HG). Functions in a L-lysine degradation pathway that proceeds via cadaverine, glutarate and L-2-hydroxyglutarate. Is extremely specific for glutarate, but it can use both 2-oxoglutarate and 2-oxoadipate (2OA) as a cosubstrate for L2HG formation. This is Glutarate 2-hydroxylase from Pseudomonas putida (strain ATCC 47054 / DSM 6125 / CFBP 8728 / NCIMB 11950 / KT2440).